The sequence spans 203 residues: Imidazoleglycerol-phosphate dehydratase (203 aa).

The protein belongs to the imidazoleglycerol-phosphate dehydratase family.

The protein localises to the cytoplasm. It catalyses the reaction D-erythro-1-(imidazol-4-yl)glycerol 3-phosphate = 3-(imidazol-4-yl)-2-oxopropyl phosphate + H2O. The protein operates within amino-acid biosynthesis; L-histidine biosynthesis; L-histidine from 5-phospho-alpha-D-ribose 1-diphosphate: step 6/9. In Helicobacter hepaticus (strain ATCC 51449 / 3B1), this protein is Imidazoleglycerol-phosphate dehydratase.